Here is a 230-residue protein sequence, read N- to C-terminus: Movement and silencing protein TGBp1 (230 aa).

The 114-residue stretch at 1–114 (MDSIINALTS…GLALRPHFIK (114 aa)) folds into the (+)RNA virus helicase ATP-binding domain. One can recognise a (+)RNA virus helicase C-terminal domain in the interval 115–230 (SVSHRLCPAT…VRSPPPHPSH (116 aa)).

The protein belongs to the Tymovirales TGBp1 protein family. In terms of assembly, homodimer and homooligomer. Interacts with capsid protein. Interacts with host AGO1; this interaction targets the host protein for degradation, thereby suppressing the antiviral RNA silencing.

It localises to the host cytoplasm. In terms of biological role, transports viral genome to neighboring plant cells directly through plasmosdesmata, without any budding. The movement protein allows efficient cell to cell propagation, by bypassing the host cell wall barrier. Increases plasmodesma size exclusion limit. Acts as a suppressor of RNA-mediated gene silencing, also known as post-transcriptional gene silencing (PTGS), a mechanism of plant viral defense that limits the accumulation of viral RNAs. This Plantago asiatica (P1AMV) protein is Movement and silencing protein TGBp1.